A 222-amino-acid chain; its full sequence is Triosephosphate isomerase (222 aa).

Residue 9–11 (NFK) coordinates substrate. His-93 (electrophile) is an active-site residue. Catalysis depends on Glu-141, which acts as the Proton acceptor. Substrate is bound by residues Ile-146, Gly-181, and 202–203 (AS).

This sequence belongs to the triosephosphate isomerase family. As to quaternary structure, homotetramer; dimer of dimers.

Its subcellular location is the cytoplasm. The enzyme catalyses D-glyceraldehyde 3-phosphate = dihydroxyacetone phosphate. It functions in the pathway carbohydrate biosynthesis; gluconeogenesis. The protein operates within carbohydrate degradation; glycolysis; D-glyceraldehyde 3-phosphate from glycerone phosphate: step 1/1. Functionally, involved in the gluconeogenesis. Catalyzes stereospecifically the conversion of dihydroxyacetone phosphate (DHAP) to D-glyceraldehyde-3-phosphate (G3P). This chain is Triosephosphate isomerase, found in Methanothermus fervidus (strain ATCC 43054 / DSM 2088 / JCM 10308 / V24 S).